The chain runs to 145 residues: [Ribosomal protein bS18]-alanine N-acetyltransferase (145 aa).

Residues 1–145 enclose the N-acetyltransferase domain; it reads MIETIVEQDF…ENAVIMALYL (145 aa). 67–69 is a binding site for acetyl-CoA; sequence LAV. Glu101 (proton acceptor) is an active-site residue. An acetyl-CoA-binding site is contributed by Asn106. Tyr113 (proton donor) is an active-site residue.

Belongs to the acetyltransferase family. RimI subfamily.

The protein resides in the cytoplasm. It carries out the reaction N-terminal L-alanyl-[ribosomal protein bS18] + acetyl-CoA = N-terminal N(alpha)-acetyl-L-alanyl-[ribosomal protein bS18] + CoA + H(+). In terms of biological role, acetylates the N-terminal alanine of ribosomal protein bS18. The chain is [Ribosomal protein bS18]-alanine N-acetyltransferase from Haemophilus ducreyi (strain 35000HP / ATCC 700724).